The sequence spans 407 residues: Cytochrome P450-pinF2, plant-inducible (407 aa).

Residue Cys-356 coordinates heme.

The protein belongs to the cytochrome P450 family. Requires heme as cofactor.

Its function is as follows. Not essential for virulence, but may be involved in the detoxification of plant protective agents at the site of wounding. The protein is Cytochrome P450-pinF2, plant-inducible (cyp104) of Rhizobium radiobacter (Agrobacterium tumefaciens).